The following is a 168-amino-acid chain: tRNA (cytidine(56)-2'-O)-methyltransferase (168 aa).

S-adenosyl-L-methionine contacts are provided by residues Leu-79 and 104 to 108 (GAEKV).

The protein belongs to the aTrm56 family. Homodimer.

The protein resides in the cytoplasm. The catalysed reaction is cytidine(56) in tRNA + S-adenosyl-L-methionine = 2'-O-methylcytidine(56) in tRNA + S-adenosyl-L-homocysteine + H(+). Functionally, specifically catalyzes the AdoMet-dependent 2'-O-ribose methylation of cytidine at position 56 in tRNAs. The polypeptide is tRNA (cytidine(56)-2'-O)-methyltransferase (Archaeoglobus fulgidus (strain ATCC 49558 / DSM 4304 / JCM 9628 / NBRC 100126 / VC-16)).